A 186-amino-acid chain; its full sequence is Intraflagellar transport protein 27 homolog (186 aa).

GTP contacts are provided by residues 12-19 (GDPAVGKT), 64-68 (DSAGK), and 123-126 (NKTD).

It belongs to the small GTPase superfamily. Rab family. As to quaternary structure, component of the IFT complex B, at least composed of IFT20, IFT25, IFT27, IFT52, IFT57, IFT74, IFT81, IFT88 and TRAF3IP1. Interacts with IFT25. Interacts with IFT70B. Interacts with RABL2/RABL2A; binding is equal in the presence of GTP or GDP. Interacts with ARL6; recognizes and binds with the GTP-free form of ARL6.

It localises to the cell projection. The protein localises to the cilium. Its subcellular location is the cytoplasm. The protein resides in the flagellum. Its function is as follows. Small GTPase-like component of the intraflagellar transport (IFT) complex B that promotes the exit of the BBSome complex from cilia via its interaction with ARL6. Not involved in entry of the BBSome complex into cilium. Prevents aggregation of GTP-free ARL6. Required for hedgehog signaling. Forms a subcomplex within the IFT complex B with IFT25. Its role in intraflagellar transport is mainly seen in tissues rich in ciliated cells such as kidney and testis. Essential for male fertility, spermiogenesis and sperm flagella formation. Plays a role in the early development of the kidney. May be involved in the regulation of ureteric bud initiation. The chain is Intraflagellar transport protein 27 homolog (IFT27) from Homo sapiens (Human).